We begin with the raw amino-acid sequence, 998 residues long: Collagen alpha-1(I) chain (998 aa).

Positions G1–P998 are disordered. 4-hydroxyproline is present on residues P18, P21, P24, P33, P48, P63, P69, P78, and P84. Over residues P26 to M39 the composition is skewed to low complexity. Residues N51–E65 show a composition bias toward basic and acidic residues. K87 carries the post-translational modification 5-hydroxylysine; alternate. K87 is a glycosylation site (O-linked (Gal...) hydroxylysine; alternate). A Phosphoserine modification is found at S93. Low complexity predominate over residues D101–L115. 4-hydroxyproline occurs at positions 116, 122, 143, 152, 155, 182, 185, 197, 203, 212, 218, 221, and 236. A compositionally biased stretch (low complexity) spans P122 to A140. A compositionally biased stretch (pro residues) spans P142 to F154. Positions A188–P238 are enriched in low complexity. K239 is subject to 5-hydroxylysine. A 4-hydroxyproline mark is found at P245, P248, P260, P269, P284, P290, P299, and P305. Residues G294–G303 are compositionally biased toward gly residues. Position 314 is a 5-hydroxylysine (K314). A 4-hydroxyproline mark is found at P323, P332, P338, P344, P353, P356, P365, P374, P380, P392, P401, P410, P413, P431, P449, P455, P461, P467, P473, P479, P491, P500, P511, P523, P526, P532, P538, and P547. Positions K347–P401 are enriched in low complexity. Low complexity predominate over residues Q443 to Q470. Positions N513–Q535 are enriched in low complexity. K559 bears the 5-hydroxylysine mark. 4-hydroxyproline is present on residues P565 and P580. Residues T592–A606 show a composition bias toward low complexity. A Phosphoserine modification is found at S595. 8 positions are modified to 4-hydroxyproline: P607, P613, P616, P625, P631, P649, P658, and P667. The segment covering A619–A646 has biased composition (low complexity). Pro residues predominate over residues P648 to P660. K670 is subject to 5-hydroxylysine. Residues S675–V691 show a composition bias toward low complexity. 4-hydroxyproline occurs at positions 679 and 685. 3-hydroxyproline is present on P693. 4-hydroxyproline occurs at positions 694, 703, 706, 727, 736, 744, 753, 771, 780, 783, 789, 804, 810, 816, 825, and 831. A compositionally biased stretch (low complexity) spans E720–E729. The span at K741 to A762 shows a compositional bias: low complexity. Pro residues predominate over residues P803–A813. Residues P815–S830 show a composition bias toward low complexity. K840 carries the post-translational modification 5-hydroxylysine. Residues P848 to V863 show a composition bias toward pro residues. P851, P854, and P857 each carry 4-hydroxyproline. The segment covering A884–P898 has biased composition (low complexity). Basic and acidic residues predominate over residues R899–I913. Position 902 is a 5-hydroxylysine (K902). Position 914 is a 5-hydroxylysine; alternate (K914). The O-linked (Gal...) hydroxylysine; alternate glycan is linked to K914. 4-hydroxyproline is present on residues P929, P932, P950, and P965. Low complexity predominate over residues P932–P965. P970 carries the 3-hydroxyproline modification. P971 carries the post-translational modification 4-hydroxyproline. The segment covering V983 to P998 has biased composition (pro residues). 3-hydroxyproline is present on P985. A 4-hydroxyproline modification is found at P986. P988 bears the 3-hydroxyproline mark. A 4-hydroxyproline modification is found at P989. Position 991 is a 3-hydroxyproline (P991). 3 positions are modified to 4-hydroxyproline: P992, P995, and P998.

It belongs to the fibrillar collagen family. As to quaternary structure, trimers of one alpha 2(I) and two alpha 1(I) chains. Contains mostly 4-hydroxyproline. Proline residues at the third position of the tripeptide repeating unit (G-X-Y) are hydroxylated in some or all of the chains. Post-translationally, contains 3-hydroxyproline at a few sites. This modification occurs on the first proline residue in the sequence motif Gly-Pro-Hyp, where Hyp is 4-hydroxyproline. In terms of processing, lysine residues at the third position of the tripeptide repeating unit (G-X-Y) are 5-hydroxylated in some or all of the chains. O-glycosylated on hydroxylated lysine residues. The O-linked glycan consists of a Glc-Gal disaccharide. As to expression, expressed in bones.

It is found in the secreted. It localises to the extracellular space. The protein resides in the extracellular matrix. Type I collagen is a member of group I collagen (fibrillar forming collagen). The protein is Collagen alpha-1(I) chain of Glyptodon sp. (strain SLP-2019) (Giant armadillo).